We begin with the raw amino-acid sequence, 529 residues long: Peptide chain release factor 3 (529 aa).

Residues 11–280 (AKRRTFAIIS…GLVEWAPAPM (270 aa)) form the tr-type G domain. Residues 20-27 (SHPDAGKT), 88-92 (DTPGH), and 142-145 (NKLD) each bind GTP.

This sequence belongs to the TRAFAC class translation factor GTPase superfamily. Classic translation factor GTPase family. PrfC subfamily.

Its subcellular location is the cytoplasm. In terms of biological role, increases the formation of ribosomal termination complexes and stimulates activities of RF-1 and RF-2. It binds guanine nucleotides and has strong preference for UGA stop codons. It may interact directly with the ribosome. The stimulation of RF-1 and RF-2 is significantly reduced by GTP and GDP, but not by GMP. This chain is Peptide chain release factor 3, found in Citrobacter koseri (strain ATCC BAA-895 / CDC 4225-83 / SGSC4696).